Here is a 311-residue protein sequence, read N- to C-terminus: Acyl-CoA dehydrogenase IpdE2 (311 aa).

FAD is bound by residues Arg206 and Gly273.

It belongs to the acyl-CoA dehydrogenase family. As to quaternary structure, heterotetramer composed of 2 IpdE1 subunits and 2 IpdE2 subunits. It depends on FAD as a cofactor.

The catalysed reaction is 3-[(3aS,4S,5R,7aS)-5-hydroxy-7a-methyl-1-oxo-octahydro-1H-inden-4-yl]propanoyl-CoA + A = (2E)-3-[(3aS,4S,5R,7aS)-5-hydroxy-7a-methyl-1-oxo-octahydro-1H-inden-4-yl]prop-2-enoyl-CoA + AH2. Its pathway is steroid metabolism; cholesterol degradation. In terms of biological role, involved in cholesterol degradation. Catalyzes the dehydrogenation of 5OH-HIP-CoA to 5OH-HIPE-CoA. The protein is Acyl-CoA dehydrogenase IpdE2 of Mycolicibacterium smegmatis (strain ATCC 700084 / mc(2)155) (Mycobacterium smegmatis).